The primary structure comprises 295 residues: Putative fused nickel transport protein NikMN (295 aa).

8 helical membrane passes run 8 to 28 (LDLSIAGLFYILSIAVLGYSI), 39 to 59 (LFGIVAAAIFAAQMLNWPIPG), 70 to 90 (LAGILLGPYAGALAMAVVLTI), 98 to 118 (GGITALGANVWNMAIVNVFVG), 135 to 155 (FIAGWIGITLAAIFAGIEIGI), 175 to 195 (ALLGLVEGTITAGVVSYIAAA), 211 to 231 (LAVIAAMIAVSPLFAYAAELV), and 268 to 288 (AGTLIAGIVGTVIVLALGFAL).

It belongs to the CbiM family. NikM subfamily.

The protein resides in the cell membrane. Its function is as follows. May be involved in nickel transport. This chain is Putative fused nickel transport protein NikMN, found in Archaeoglobus fulgidus (strain ATCC 49558 / DSM 4304 / JCM 9628 / NBRC 100126 / VC-16).